We begin with the raw amino-acid sequence, 199 residues long: Thymidine kinase (199 aa).

Residues 15–22 (GSMFSGKS) and 88–91 (DEIQ) each bind ATP. Glutamate 89 acts as the Proton acceptor in catalysis. Zn(2+) is bound by residues cysteine 145, cysteine 148, cysteine 183, and histidine 186.

This sequence belongs to the thymidine kinase family. Homotetramer.

It localises to the cytoplasm. It catalyses the reaction thymidine + ATP = dTMP + ADP + H(+). This Staphylococcus haemolyticus (strain JCSC1435) protein is Thymidine kinase.